Reading from the N-terminus, the 178-residue chain is Large ribosomal subunit protein uL6 (178 aa).

Belongs to the universal ribosomal protein uL6 family. In terms of assembly, part of the 50S ribosomal subunit.

This protein binds to the 23S rRNA, and is important in its secondary structure. It is located near the subunit interface in the base of the L7/L12 stalk, and near the tRNA binding site of the peptidyltransferase center. The chain is Large ribosomal subunit protein uL6 from Halalkalibacterium halodurans (strain ATCC BAA-125 / DSM 18197 / FERM 7344 / JCM 9153 / C-125) (Bacillus halodurans).